The following is a 297-amino-acid chain: Dehydrodolichyl diphosphate synthase complex subunit Nus1 (297 aa).

A run of 2 helical transmembrane segments spans residues 7 to 26 and 40 to 56; these read LVWR…TSWL and CCRA…GFTL. Basic residues predominate over residues 63–73; the sequence is GRNRRHHRHPH. The tract at residues 63 to 86 is disordered; sequence GRNRRHHRHPHGGPGPGPGPAATH. A helical transmembrane segment spans residues 121–139; that stretch reads IASLVVWCMAVGISYISVY. N-linked (GlcNAc...) asparagine glycosylation is found at asparagine 148 and asparagine 275. The short motif at 294–296 is the RXG motif; crucial for prenyltransferase activity element; that stretch reads RLG. The isopentenyl diphosphate site is built by leucine 295 and glycine 296.

It belongs to the UPP synthase family. In terms of assembly, the active dehydrodolichyl diphosphate synthase complex is a heterotetramer composed of a dimer of heterodimer of DHDDS and NUS1. Interacts with NPC2. The cofactor is Mg(2+). As to expression, highly expressed in heart, liver, kidney and pancreas.

It is found in the endoplasmic reticulum membrane. The enzyme catalyses n isopentenyl diphosphate + (2E,6E)-farnesyl diphosphate = a di-trans,poly-cis-polyprenyl diphosphate + n diphosphate. The protein operates within protein modification; protein glycosylation. It functions in the pathway lipid metabolism. In terms of biological role, with DHDDS, forms the dehydrodolichyl diphosphate synthase (DDS) complex, an essential component of the dolichol monophosphate (Dol-P) biosynthetic machinery. Both subunits contribute to enzymatic activity, i.e. condensation of multiple copies of isopentenyl pyrophosphate (IPP) to farnesyl pyrophosphate (FPP) to produce dehydrodolichyl diphosphate (Dedol-PP), a precursor of dolichol phosphate which is utilized as a sugar carrier in protein glycosylation in the endoplasmic reticulum (ER). Synthesizes long-chain polyprenols, mostly of C95 and C100 chain length. Regulates the glycosylation and stability of nascent NPC2, thereby promoting trafficking of LDL-derived cholesterol. Acts as a specific receptor for the N-terminus of Nogo-B, a neural and cardiovascular regulator. This Mus musculus (Mouse) protein is Dehydrodolichyl diphosphate synthase complex subunit Nus1.